A 362-amino-acid polypeptide reads, in one-letter code: Glutaminase-asparaginase (362 aa).

The first 25 residues, 1–25, serve as a signal peptide directing secretion; it reads MNAALKTFAPSALALLLILPSSASA. One can recognise an Asparaginase/glutaminase domain in the interval 35–362; sequence ANVVILATGG…KELQRIFWEY (328 aa). Residue Thr-45 is the Acyl-ester intermediate of the active site. Substrate contacts are provided by residues Ser-92 and 125–126; that span reads TD.

The protein belongs to the asparaginase 1 family. As to quaternary structure, homotetramer.

It localises to the periplasm. It carries out the reaction L-glutamine + H2O = L-glutamate + NH4(+). It catalyses the reaction L-asparagine + H2O = L-aspartate + NH4(+). This Pseudomonas putida (strain ATCC 47054 / DSM 6125 / CFBP 8728 / NCIMB 11950 / KT2440) protein is Glutaminase-asparaginase (ansB).